A 488-amino-acid polypeptide reads, in one-letter code: Protein nucleotidyltransferase YdiU (488 aa).

Residues Gly91, Gly93, Arg94, Lys114, Asp126, Gly127, Arg177, and Arg184 each coordinate ATP. Catalysis depends on Asp253, which acts as the Proton acceptor. The Mg(2+) site is built by Asn254 and Asp263. An ATP-binding site is contributed by Asp263.

This sequence belongs to the SELO family. Mg(2+) is required as a cofactor. Requires Mn(2+) as cofactor.

It catalyses the reaction L-seryl-[protein] + ATP = 3-O-(5'-adenylyl)-L-seryl-[protein] + diphosphate. The catalysed reaction is L-threonyl-[protein] + ATP = 3-O-(5'-adenylyl)-L-threonyl-[protein] + diphosphate. It carries out the reaction L-tyrosyl-[protein] + ATP = O-(5'-adenylyl)-L-tyrosyl-[protein] + diphosphate. The enzyme catalyses L-histidyl-[protein] + UTP = N(tele)-(5'-uridylyl)-L-histidyl-[protein] + diphosphate. It catalyses the reaction L-seryl-[protein] + UTP = O-(5'-uridylyl)-L-seryl-[protein] + diphosphate. The catalysed reaction is L-tyrosyl-[protein] + UTP = O-(5'-uridylyl)-L-tyrosyl-[protein] + diphosphate. Functionally, nucleotidyltransferase involved in the post-translational modification of proteins. It can catalyze the addition of adenosine monophosphate (AMP) or uridine monophosphate (UMP) to a protein, resulting in modifications known as AMPylation and UMPylation. This chain is Protein nucleotidyltransferase YdiU, found in Bacillus cereus (strain G9842).